We begin with the raw amino-acid sequence, 107 residues long: Phosphoribosyl-ATP pyrophosphatase (107 aa).

The protein belongs to the PRA-PH family.

It localises to the cytoplasm. The catalysed reaction is 1-(5-phospho-beta-D-ribosyl)-ATP + H2O = 1-(5-phospho-beta-D-ribosyl)-5'-AMP + diphosphate + H(+). The protein operates within amino-acid biosynthesis; L-histidine biosynthesis; L-histidine from 5-phospho-alpha-D-ribose 1-diphosphate: step 2/9. This Caulobacter vibrioides (strain ATCC 19089 / CIP 103742 / CB 15) (Caulobacter crescentus) protein is Phosphoribosyl-ATP pyrophosphatase (hisE).